We begin with the raw amino-acid sequence, 223 residues long: Germin-like protein subfamily 1 member 10 (223 aa).

A signal peptide spans Met-1–Ala-24. A disulfide bridge links Cys-34 with Cys-51. The N-linked (GlcNAc...) asparagine glycan is linked to Asn-38. Residues Pro-65–Met-215 form the Cupin type-1 domain. The Mn(2+) site is built by His-113, His-115, Glu-120, and His-161.

Belongs to the germin family. As to quaternary structure, oligomer (believed to be a pentamer but probably hexamer).

Its subcellular location is the secreted. It is found in the extracellular space. The protein resides in the apoplast. May play a role in plant defense. Probably has no oxalate oxidase activity even if the active site is conserved. The chain is Germin-like protein subfamily 1 member 10 from Arabidopsis thaliana (Mouse-ear cress).